The primary structure comprises 352 residues: Protein RecA (352 aa).

66–73 (GPESSGKT) serves as a coordination point for ATP. A disordered region spans residues 330 to 352 (TKDDSKVATVDKANEEQAAEPVQ).

Belongs to the RecA family.

It localises to the cytoplasm. Its function is as follows. Can catalyze the hydrolysis of ATP in the presence of single-stranded DNA, the ATP-dependent uptake of single-stranded DNA by duplex DNA, and the ATP-dependent hybridization of homologous single-stranded DNAs. It interacts with LexA causing its activation and leading to its autocatalytic cleavage. In Psychrobacter cryohalolentis (strain ATCC BAA-1226 / DSM 17306 / VKM B-2378 / K5), this protein is Protein RecA.